The chain runs to 509 residues: Bifunctional purine biosynthesis protein PurH (509 aa).

An MGS-like domain is found at Met1–Val144.

It belongs to the PurH family.

It catalyses the reaction (6R)-10-formyltetrahydrofolate + 5-amino-1-(5-phospho-beta-D-ribosyl)imidazole-4-carboxamide = 5-formamido-1-(5-phospho-D-ribosyl)imidazole-4-carboxamide + (6S)-5,6,7,8-tetrahydrofolate. It carries out the reaction IMP + H2O = 5-formamido-1-(5-phospho-D-ribosyl)imidazole-4-carboxamide. The protein operates within purine metabolism; IMP biosynthesis via de novo pathway; 5-formamido-1-(5-phospho-D-ribosyl)imidazole-4-carboxamide from 5-amino-1-(5-phospho-D-ribosyl)imidazole-4-carboxamide (10-formyl THF route): step 1/1. It functions in the pathway purine metabolism; IMP biosynthesis via de novo pathway; IMP from 5-formamido-1-(5-phospho-D-ribosyl)imidazole-4-carboxamide: step 1/1. The sequence is that of Bifunctional purine biosynthesis protein PurH from Listeria monocytogenes serovar 1/2a (strain ATCC BAA-679 / EGD-e).